Consider the following 314-residue polypeptide: 3'-5' exoribonuclease YhaM (314 aa).

The HD domain maps to 163–279; that stretch reads HVVSMLNLAK…LHYIDNLDAK (117 aa).

This sequence belongs to the YhaM family.

Functionally, shows a 3'-5' exoribonuclease activity. This chain is 3'-5' exoribonuclease YhaM, found in Bacillus velezensis (strain DSM 23117 / BGSC 10A6 / LMG 26770 / FZB42) (Bacillus amyloliquefaciens subsp. plantarum).